Reading from the N-terminus, the 545-residue chain is Glucose-6-phosphate isomerase (545 aa).

Glu-351 functions as the Proton donor in the catalytic mechanism. Catalysis depends on residues His-382 and Lys-510.

This sequence belongs to the GPI family.

It localises to the cytoplasm. It carries out the reaction alpha-D-glucose 6-phosphate = beta-D-fructose 6-phosphate. It participates in carbohydrate biosynthesis; gluconeogenesis. Its pathway is carbohydrate degradation; glycolysis; D-glyceraldehyde 3-phosphate and glycerone phosphate from D-glucose: step 2/4. In terms of biological role, catalyzes the reversible isomerization of glucose-6-phosphate to fructose-6-phosphate. This Shewanella amazonensis (strain ATCC BAA-1098 / SB2B) protein is Glucose-6-phosphate isomerase.